The primary structure comprises 736 residues: Putative ATP-dependent RNA helicase CG14443 (736 aa).

Disordered stretches follow at residues 32 to 58, 73 to 166, 183 to 237, and 265 to 296; these read TKSS…SSVL, GIEG…GERP, NSFK…NSWR, and SFTR…NTWK. Composition is skewed to low complexity over residues 34–58 and 125–160; these read SSIW…SSVL and SSES…SHGS. The segment covering 190–199 has biased composition (basic and acidic residues); the sequence is TSRENKESRS. Polar residues predominate over residues 277 to 296; that stretch reads LCYQDQSKNPSRPSNYNTWK. The Q motif motif lies at 330–358; that stretch reads LSFERSGFNATILQQLEDQGYDGPTPIQA. The Helicase ATP-binding domain occupies 361–534; the sequence is WSIAKEGKNI…NKFLGQYTAI (174 aa). 374–381 lines the ATP pocket; the sequence is SGKGTGKT. The short motif at 482 to 485 is the DEAD box element; sequence DNID. Residues 561–719 form the Helicase C-terminal domain; the sequence is KVERLMKELT…LLQLAEEKMF (159 aa).

It belongs to the DEAD box helicase family.

The enzyme catalyses ATP + H2O = ADP + phosphate + H(+). Probable ATP-binding RNA helicase. The protein is Putative ATP-dependent RNA helicase CG14443 of Drosophila melanogaster (Fruit fly).